Here is a 430-residue protein sequence, read N- to C-terminus: Serine--tRNA ligase (430 aa).

Residue 237–239 (TAE) participates in L-serine binding. 268 to 270 (RSE) lines the ATP pocket. Glu291 is a binding site for L-serine. ATP is bound at residue 355 to 358 (EISS). Ser391 provides a ligand contact to L-serine.

Belongs to the class-II aminoacyl-tRNA synthetase family. Type-1 seryl-tRNA synthetase subfamily. As to quaternary structure, homodimer. The tRNA molecule binds across the dimer.

The protein localises to the cytoplasm. It catalyses the reaction tRNA(Ser) + L-serine + ATP = L-seryl-tRNA(Ser) + AMP + diphosphate + H(+). The enzyme catalyses tRNA(Sec) + L-serine + ATP = L-seryl-tRNA(Sec) + AMP + diphosphate + H(+). The protein operates within aminoacyl-tRNA biosynthesis; selenocysteinyl-tRNA(Sec) biosynthesis; L-seryl-tRNA(Sec) from L-serine and tRNA(Sec): step 1/1. Functionally, catalyzes the attachment of serine to tRNA(Ser). Is also able to aminoacylate tRNA(Sec) with serine, to form the misacylated tRNA L-seryl-tRNA(Sec), which will be further converted into selenocysteinyl-tRNA(Sec). This is Serine--tRNA ligase from Klebsiella pneumoniae subsp. pneumoniae (strain ATCC 700721 / MGH 78578).